Here is a 470-residue protein sequence, read N- to C-terminus: Putative multidrug resistance protein MdtD (470 aa).

The Periplasmic portion of the chain corresponds to 1 to 11 (MTELPDNTRWQ). The chain crosses the membrane as a helical span at residues 12-32 (LWIVAFGFFMQSLDTTIVNTA). The Cytoplasmic portion of the chain corresponds to 33–48 (LPSMAKSLGESPLHMH). Residues 49–69 (MVVVSYVLTVAVMLPASGWLA) traverse the membrane as a helical segment. The Periplasmic portion of the chain corresponds to 70-76 (DKIGVRN). The helical transmembrane segment at 77–97 (IFFAAIVLFTLGSLFCALSGT) threads the bilayer. The Cytoplasmic portion of the chain corresponds to 98 to 101 (LNQL). A helical transmembrane segment spans residues 102–124 (VLARVLQGVGGAMMVPVGRLTVM). Residues 125-137 (KIVPRTQYMAAMT) are Periplasmic-facing. The helical transmembrane segment at 138–158 (FVTLPGQIGPLLGPALGGVLV) threads the bilayer. Over 159–164 (EYASWH) the chain is Cytoplasmic. Residues 165–185 (WIFLINIPVGIVGAMATFMLM) form a helical membrane-spanning segment. Residues 186-196 (PNYTIETRRFD) lie on the Periplasmic side of the membrane. A helical transmembrane segment spans residues 197–217 (LPGFLLLAIGMAVLTLALDGS). Residues 218 to 224 (KSMGISP) are Cytoplasmic-facing. The chain crosses the membrane as a helical span at residues 225 to 245 (WTLAGLAAGGAAAILLYLFHA). At 246–262 (KKNSGALFSLRLFRTPT) the chain is on the periplasmic side. Residues 263–283 (FSLGLLGSFAGRIGSGMLPFM) traverse the membrane as a helical segment. The Cytoplasmic segment spans residues 284-285 (TP). The helical transmembrane segment at 286–306 (VFLQIGLGFSPFHAGLMMIPM) threads the bilayer. The Periplasmic portion of the chain corresponds to 307–341 (VLGSMGMKRIVVQIVNRFGYRRVLVATTLGLALVS). Residues 342–362 (LLFMSVALLGWYYLLPLVLLL) traverse the membrane as a helical segment. The Cytoplasmic portion of the chain corresponds to 363-395 (QGMVNSARFSSMNTLTLKDLPDTLASSGNSLLS). The helical transmembrane segment at 396 to 416 (MIMQLSMSIGVTIAGMLLGMF) threads the bilayer. Topologically, residues 417 to 430 (GQQHIGIDSSATHH) are periplasmic. Residues 431 to 451 (VFMYTWLCMAVIIALPAIIFA) traverse the membrane as a helical segment. The Cytoplasmic portion of the chain corresponds to 452-470 (RVPNDTQQNMVISRRKRSL).

The protein belongs to the major facilitator superfamily. TCR/Tet family.

It localises to the cell inner membrane. This Salmonella dublin (strain CT_02021853) protein is Putative multidrug resistance protein MdtD.